Reading from the N-terminus, the 154-residue chain is Protein X (154 aa).

The segment at 68-117 (PCALRFTSARRMETTVNAHQILPKVLHKRTLGLSAMSTTDLEAYFKDCLF) is mitochondrial targeting sequence.

The protein belongs to the orthohepadnavirus protein X family. In terms of assembly, may form homodimer. May interact with host CEBPA, CFLAR, CREB1, DDB1, E4F1, HBXIP, HSPD1/HSP60, NFKBIA, POLR2E and SMAD4. Interacts with host SMC5-SMC6 complex and induces its degradation. Interacts with host TRPC4AP; leading to prevent ubiquitination of TRPC4AP. Interacts with host PLSCR1; this interaction promotes ubiquitination and degradation of HBx and impairs HBx-mediated cell proliferation. In terms of processing, a fraction may be phosphorylated in insect cells and HepG2 cells, a human hepatoblastoma cell line. Phosphorylated in vitro by host protein kinase C or mitogen-activated protein kinase. N-acetylated in insect cells.

The protein localises to the host cytoplasm. The protein resides in the host nucleus. It localises to the host mitochondrion. Functionally, multifunctional protein that plays a role in silencing host antiviral defenses and promoting viral transcription. Does not seem to be essential for HBV infection. May be directly involved in development of cirrhosis and liver cancer (hepatocellular carcinoma). Most of cytosolic activities involve modulation of cytosolic calcium. The effect on apoptosis is controversial depending on the cell types in which the studies have been conducted. May induce apoptosis by localizing in mitochondria and causing loss of mitochondrial membrane potential. May also modulate apoptosis by binding host CFLAR, a key regulator of the death-inducing signaling complex (DISC). Promotes viral transcription by using the host E3 ubiquitin ligase DDB1 to target the SMC5-SMC6 complex to proteasomal degradation. This host complex would otherwise bind to viral episomal DNA, and prevents its transcription. Moderately stimulates transcription of many different viral and cellular transcription elements. Promoters and enhancers stimulated by HBx contain DNA binding sites for NF-kappa-B, AP-1, AP-2, c-EBP, ATF/CREB, or the calcium-activated factor NF-AT. This Hepatitis B virus genotype D subtype ayw (isolate France/Tiollais/1979) (HBV-D) protein is Protein X.